We begin with the raw amino-acid sequence, 679 residues long: Methionine--tRNA ligase (679 aa).

A 'HIGH' region motif is present at residues 14 to 24 (PYANGSIHLGH). Zn(2+) contacts are provided by Cys-145, Cys-148, Cys-158, and Cys-161. The 'KMSKS' region signature appears at 331–335 (KMSKS). Lys-334 is an ATP binding site. In terms of domain architecture, tRNA-binding spans 577–679 (TFAAVDLRVA…SGAKPGQRIK (103 aa)).

This sequence belongs to the class-I aminoacyl-tRNA synthetase family. MetG type 1 subfamily. Homodimer. Requires Zn(2+) as cofactor.

The protein resides in the cytoplasm. The enzyme catalyses tRNA(Met) + L-methionine + ATP = L-methionyl-tRNA(Met) + AMP + diphosphate. Functionally, is required not only for elongation of protein synthesis but also for the initiation of all mRNA translation through initiator tRNA(fMet) aminoacylation. This chain is Methionine--tRNA ligase, found in Pseudomonas putida (strain GB-1).